The chain runs to 332 residues: Cytoplasmic phosphatidylinositol transfer protein 1 (332 aa).

Phosphoserine is present on residues serine 119, serine 270, and serine 274. Residues serine 267–proline 285 show a composition bias toward low complexity. Residues serine 267 to glutamate 332 form a disordered region. A Phosphothreonine modification is found at threonine 278. Positions serine 322 to glutamate 332 are enriched in basic and acidic residues.

It belongs to the PtdIns transfer protein family. PI transfer class IIB subfamily. As to expression, ubiquitously expressed.

It is found in the cytoplasm. It carries out the reaction a 1,2-diacyl-sn-glycero-3-phospho-(1D-myo-inositol)(in) = a 1,2-diacyl-sn-glycero-3-phospho-(1D-myo-inositol)(out). The enzyme catalyses a 1,2-diacyl-sn-glycero-3-phosphate(in) = a 1,2-diacyl-sn-glycero-3-phosphate(out). Functionally, catalyzes the transfer of phosphatidylinositol (PI) and phosphatidic acid (PA) between membranes. Binds PA derived from the phospholipase D signaling pathway and among the cellular PA species, preferably binds to the C16:0/16:1 and C16:1/18:1 PA species. Its function is as follows. Catalyzes the transfer of phosphatidylinositol between membranes. The polypeptide is Cytoplasmic phosphatidylinositol transfer protein 1 (PITPNC1) (Homo sapiens (Human)).